A 154-amino-acid chain; its full sequence is Large ribosomal subunit protein uL13 (154 aa).

It belongs to the universal ribosomal protein uL13 family. Part of the 50S ribosomal subunit.

This protein is one of the early assembly proteins of the 50S ribosomal subunit, although it is not seen to bind rRNA by itself. It is important during the early stages of 50S assembly. This chain is Large ribosomal subunit protein uL13, found in Brucella melitensis biotype 2 (strain ATCC 23457).